Reading from the N-terminus, the 488-residue chain is ATP synthase subunit beta (488 aa).

164–171 is an ATP binding site; sequence GGAGVGKT.

The protein belongs to the ATPase alpha/beta chains family. As to quaternary structure, F-type ATPases have 2 components, CF(1) - the catalytic core - and CF(0) - the membrane proton channel. CF(1) has five subunits: alpha(3), beta(3), gamma(1), delta(1), epsilon(1). CF(0) has four main subunits: a(1), b(1), b'(1) and c(9-12).

The protein resides in the cellular thylakoid membrane. It carries out the reaction ATP + H2O + 4 H(+)(in) = ADP + phosphate + 5 H(+)(out). Its function is as follows. Produces ATP from ADP in the presence of a proton gradient across the membrane. The catalytic sites are hosted primarily by the beta subunits. This Prochlorococcus marinus (strain NATL1A) protein is ATP synthase subunit beta.